Consider the following 156-residue polypeptide: Small ribosomal subunit protein uS7 (156 aa).

It belongs to the universal ribosomal protein uS7 family. In terms of assembly, part of the 30S ribosomal subunit. Contacts proteins S9 and S11.

Its function is as follows. One of the primary rRNA binding proteins, it binds directly to 16S rRNA where it nucleates assembly of the head domain of the 30S subunit. Is located at the subunit interface close to the decoding center, probably blocks exit of the E-site tRNA. The sequence is that of Small ribosomal subunit protein uS7 from Shewanella frigidimarina (strain NCIMB 400).